A 473-amino-acid chain; its full sequence is ATP synthase subunit beta (473 aa).

Gly-158–Thr-165 contacts ATP.

Belongs to the ATPase alpha/beta chains family. F-type ATPases have 2 components, CF(1) - the catalytic core - and CF(0) - the membrane proton channel. CF(1) has five subunits: alpha(3), beta(3), gamma(1), delta(1), epsilon(1). CF(0) has three main subunits: a(1), b(2) and c(9-12). The alpha and beta chains form an alternating ring which encloses part of the gamma chain. CF(1) is attached to CF(0) by a central stalk formed by the gamma and epsilon chains, while a peripheral stalk is formed by the delta and b chains.

The protein localises to the cell membrane. It carries out the reaction ATP + H2O + 4 H(+)(in) = ADP + phosphate + 5 H(+)(out). In terms of biological role, produces ATP from ADP in the presence of a proton gradient across the membrane. The catalytic sites are hosted primarily by the beta subunits. The polypeptide is ATP synthase subunit beta (Carboxydothermus hydrogenoformans (strain ATCC BAA-161 / DSM 6008 / Z-2901)).